A 384-amino-acid polypeptide reads, in one-letter code: MLLVLVLIGLNMRPLLTSVGPLLPQLRQASGMSFSVAALLTALPVVTMGGLALAGSWLHQHVSERRSVAISLLLIAVGALMRELYPQSALLLSSALLGGVGIGIIQAVMPSVIKRRFQQRTPLVMGLWSAALMGGGGLGAAITPWLVQHSETWYQTLAWWALPAVVALFAWWWQSAREVASSHKTTTTPVRVVFTPRAWTLGVYFGLINGGYASLIAWLPAFYIEIGASAQYSGSLLALMTLGQAAGALLMPAMARHQDRRKLLMLALVLQLVGFCGFIWLPMQLPVLWAMVCGLGLGGAFPLCLLLALDHSVQPAIAGKLVAFMQGIGFIIAGLAPWFSGVLRSISGNYLMDWAFHALCVVGLMIITLRFAPVRFPQLWVKEA.

12 helical membrane-spanning segments follow: residues 3 to 23 (LVLV…GPLL), 34 to 54 (FSVA…LALA), 68 to 88 (VAIS…YPQS), 89 to 109 (ALLL…QAVM), 122 to 142 (PLVM…GAAI), 153 to 173 (WYQT…AWWW), 204 to 224 (YFGL…AFYI), 235 to 255 (SLLA…PAMA), 263 to 283 (LLML…WLPM), 287 to 307 (VLWA…CLLL), 322 to 342 (VAFM…FSGV), and 354 to 374 (WAFH…FAPV).

Belongs to the major facilitator superfamily. Cyanate porter (TC 2.A.1.17) family.

The protein resides in the cell inner membrane. Its function is as follows. This protein is part of an active transport system that transports exogenous cyanate into E.coli cells. The chain is Cyanate transport protein CynX (cynX) from Escherichia coli (strain K12).